We begin with the raw amino-acid sequence, 187 residues long: Ribosome maturation factor RimM (187 aa).

One can recognise a PRC barrel domain in the interval 95-178 (DEDEFFYADL…GLVEDKDESL (84 aa)).

This sequence belongs to the RimM family. In terms of assembly, binds ribosomal protein uS19.

It is found in the cytoplasm. Functionally, an accessory protein needed during the final step in the assembly of 30S ribosomal subunit, possibly for assembly of the head region. Essential for efficient processing of 16S rRNA. May be needed both before and after RbfA during the maturation of 16S rRNA. It has affinity for free ribosomal 30S subunits but not for 70S ribosomes. This chain is Ribosome maturation factor RimM, found in Sinorhizobium fredii (strain NBRC 101917 / NGR234).